Consider the following 361-residue polypeptide: dTDP-glucose 4,6-dehydratase (361 aa).

NAD(+) contacts are provided by residues 11–12 (FI), 32–35 (DKLT), 58–59 (DI), 80–84 (LAAES), and threonine 99. Residue serine 84 coordinates substrate. Threonine 133 lines the substrate pocket. Residue aspartate 134 is the Proton donor of the active site. Residues glutamate 135 and tyrosine 167 each act as proton acceptor in the active site. Residue 167-171 (YSASK) coordinates NAD(+). Asparagine 196 is a substrate binding site. Asparagine 197 provides a ligand contact to NAD(+). Substrate contacts are provided by residues 206–207 (KL), 222–224 (PIY), arginine 231, asparagine 266, and 296–300 (DRPGH).

This sequence belongs to the NAD(P)-dependent epimerase/dehydratase family. dTDP-glucose dehydratase subfamily. As to quaternary structure, homodimer. Requires NAD(+) as cofactor.

It catalyses the reaction dTDP-alpha-D-glucose = dTDP-4-dehydro-6-deoxy-alpha-D-glucose + H2O. It functions in the pathway carbohydrate biosynthesis; dTDP-L-rhamnose biosynthesis. Its pathway is bacterial outer membrane biogenesis; LPS O-antigen biosynthesis. Its function is as follows. Catalyzes the dehydration of dTDP-D-glucose to form dTDP-6-deoxy-D-xylo-4-hexulose via a three-step process involving oxidation, dehydration and reduction. The polypeptide is dTDP-glucose 4,6-dehydratase (rfbB) (Shigella flexneri).